The sequence spans 346 residues: DNA-directed RNA polymerase subunit alpha (346 aa).

An alpha N-terminal domain (alpha-NTD) region spans residues 1-242 (MLIQDGDKLI…DQLSVFINFD (242 aa)). The tract at residues 258–346 (LNPNLFKSID…WLKRKEKNEA (89 aa)) is alpha C-terminal domain (alpha-CTD).

The protein belongs to the RNA polymerase alpha chain family. Homodimer. The RNAP catalytic core consists of 2 alpha, 1 beta, 1 beta' and 1 omega subunit. When a sigma factor is associated with the core the holoenzyme is formed, which can initiate transcription.

It catalyses the reaction RNA(n) + a ribonucleoside 5'-triphosphate = RNA(n+1) + diphosphate. In terms of biological role, DNA-dependent RNA polymerase catalyzes the transcription of DNA into RNA using the four ribonucleoside triphosphates as substrates. The polypeptide is DNA-directed RNA polymerase subunit alpha (Maridesulfovibrio salexigens (strain ATCC 14822 / DSM 2638 / NCIMB 8403 / VKM B-1763) (Desulfovibrio salexigens)).